The chain runs to 329 residues: MDTTEKLKLINRNLKEVIGGDIMEKIINKRDLNVYWGTATTGKPHIAYFLPILKIKDFVDAGCNVTILLADIHAFLDNLKAPIEKIECRSQYYKKIITLMLKSIKVDVSKISFIFGSEYQKSNKYFTDILRILNQTKKNDARRAGSEVVKQVKNSKLSSLVYPAMQALDEEYLNVDVQFGGIDQRKIFMYAREFLPLLKYKKRIHLMNPMIPGLNSDKMSSSDIDSKIDLLDTKLEIYKKIHNCSLENEGLIFLFKSIIYPYCSIFNLQIMISGKVYTFDKLYEDIKMKIIDETELKNIASDMIERLICPIRDEMLRDLKLIENAYGNK.

Y35 contributes to the L-tyrosine binding site. The short motif at 40–48 is the 'HIGH' region element; it reads TTGKPHIAY. Residues Y162, Q166, D169, and Q184 each coordinate L-tyrosine. The short motif at 218 to 222 is the 'KMSKS' region element; it reads KMSSS.

It belongs to the class-I aminoacyl-tRNA synthetase family. In terms of assembly, homodimer.

The protein localises to the cytoplasm. The catalysed reaction is tRNA(Tyr) + L-tyrosine + ATP = L-tyrosyl-tRNA(Tyr) + AMP + diphosphate + H(+). In Vairimorpha ceranae (strain BRL01) (Microsporidian parasite), this protein is Probable tyrosine--tRNA ligase, cytoplasmic.